The sequence spans 512 residues: MDTTTAKQASTKFVVLGLLLGILMSAMDNTIVATAMGNIVADLGSFDKFAWVTASYMVAVMAGMPIYGKLSDMYGRKRFFLFGLIFFLIGSALCGIAQTMNQLIIFRAIQGIGGGALLPIAFTIIFDLFPPEKRGKMSGMFGAVFGLSSVLGPLLGAIITDSISWHWVFYINVPIGALSLFFIIRYYKESLEHRKQKIDWGGAITLVVSIVCLMFALELGGKTYDWNSIQIIGLFIVFAVFFIAFFIVERKAEEPIISFWMFKNRLFATAQILAFLYGGTFIILAVFIPIFVQAVYGSSATSAGFILTPMMIGSVIGSMIGGIFQTKASFRNLMLISVIAFFIGMLLLSNMTPDTARVWLTVFMMISGFGVGFNFSLLPAASMNDLEPRFRGTANSTNSFLRSFGMTLGVTIFGTVQTNVFTNKLNDAFSGMKGSAGSGAAQNIGDPQEIFQAGTRSQIPDAILNRIIDAMSSSITYVFLLALIPIVLAAVTILFMGKARVKTTAEMTKKAN.

14 helical membrane passes run Phe13–Ala33, Lys48–Gly68, Phe79–Thr99, Ile109–Phe129, Gly139–Ile159, Ile163–Ile183, Trp200–Gly220, Ser228–Val248, Ile272–Val292, Gly304–Phe324, Leu333–Pro353, Val358–Leu378, Ser399–Phe421, and Ile475–Phe495.

This sequence belongs to the major facilitator superfamily. EmrB family.

It is found in the cell membrane. Its function is as follows. Confers resistance to puromycin, tosufloxacin and norfloxacin. This is Multidrug resistance protein 3 (bmr3) from Bacillus subtilis (strain 168).